The primary structure comprises 315 residues: MNQHTDNQQLPPAILLMGPTASGKTALAIELCQALPCEIISVDSALIYKGMDIGTAKPTAEELAQAPHRLIDILDPVQSYSVAEFRRDALAAMQDITQRGRIPLLVGGTMMYYKALTDGLSTLPQADPLVRAEIEKQAEKNGWQALHQELQGIDPVSAQRIHPNDPQRLSRALEIYRISGKSMTELSLNKQPSAPYQFSQFAIAPSDRHILHDRIAQRFDIMLNSGFEDEVIELKSRADLHLDLPSMRCVGYRQMWQYLDGENIYQEMREKGLAATRQLAKRQLTWLRSWQNLHWLDTFSKDNLTNVMKLSRIRT.

An ATP-binding site is contributed by 18 to 25 (GPTASGKT). 20-25 (TASGKT) serves as a coordination point for substrate. Interaction with substrate tRNA regions lie at residues 43 to 46 (DSAL), 167 to 171 (QRLSR), and 248 to 253 (RCVGYR).

This sequence belongs to the IPP transferase family. In terms of assembly, monomer. Requires Mg(2+) as cofactor.

The catalysed reaction is adenosine(37) in tRNA + dimethylallyl diphosphate = N(6)-dimethylallyladenosine(37) in tRNA + diphosphate. In terms of biological role, catalyzes the transfer of a dimethylallyl group onto the adenine at position 37 in tRNAs that read codons beginning with uridine, leading to the formation of N6-(dimethylallyl)adenosine (i(6)A). The protein is tRNA dimethylallyltransferase of Pseudoalteromonas atlantica (strain T6c / ATCC BAA-1087).